Consider the following 1061-residue polypeptide: Lysine-specific demethylase jmjd-3.1 (1061 aa).

2 disordered regions span residues 30 to 49 (VKNS…MRPV) and 256 to 417 (KSLS…KRRT). A compositionally biased stretch (polar residues) spans 271–287 (QHTNSVGSSIGTTSGDS). Over residues 310–320 (STSSEFTETTS) the composition is skewed to low complexity. The span at 321–330 (VANQTESNAG) shows a compositional bias: polar residues. Positions 369–417 (KKKEQSATEPPIPRTKRAYTKNPNTIRKRRMKKNQSDDEEDDGPPKRRT) are required for nuclear localization. Positions 418-759 (INYQIEFRDA…FGTNIDLLSE (342 aa)) are required for binding of unc-3 and for function in Y-to-PDA transdifferentiation. The JmjC domain occupies 760-923 (NFKKQMNEIE…LATSIVAHDH (164 aa)). Fe cation contacts are provided by His811, Glu813, and His891. The Zn(2+) site is built by Cys998, Cys1001, Cys1025, and Cys1028.

Belongs to the UTX family. Interacts with wdr-5.1 and unc-3. Fe(2+) serves as cofactor. In terms of tissue distribution, mainly expressed in head and tail.

The protein localises to the nucleus. Functionally, histone demethylase that specifically demethylates trimethylated 'Lys-27' of histone H3, a mark associated with transcriptional repression, thereby playing a central role in the histone code. Involved in the transcriptional regulation of the heat shock response, unfolded protein response and possibly other stress response target genes. Required for gonad development and organization. Required for the robust transdifferentiation of the Y rectal epithelial cell to the PDA motor neuron during larval development. Acts cell-autonomously in Y-to-PDA transdifferentiation, which depends on the demethylase activity and on recognition of the H3 tail. Cooperates with set-2 and unc-3 to ensure robust Y-to-PDA transdifferentiation. Promotes mitochondrial stress-induced longevity. Involved in lifespan regulation. The sequence is that of Lysine-specific demethylase jmjd-3.1 from Caenorhabditis elegans.